The primary structure comprises 146 residues: Small ribosomal subunit protein uS9z (146 aa).

It belongs to the universal ribosomal protein uS9 family.

This is Small ribosomal subunit protein uS9z (RPS16A) from Arabidopsis thaliana (Mouse-ear cress).